A 339-amino-acid polypeptide reads, in one-letter code: ATP-dependent 6-phosphofructokinase (339 aa).

Residues G11, 72–73 (RY), and 102–105 (GDGS) contribute to the ATP site. D103 serves as a coordination point for Mg(2+). Substrate-binding positions include 125–127 (TID), R162, and 169–171 (MGR). D127 functions as the Proton acceptor in the catalytic mechanism. ADP contacts are provided by residues 185-187 (GAD) and 214-216 (KSH). Residues E223, R245, and 251 to 254 (HVIR) each bind substrate.

It belongs to the phosphofructokinase type A (PFKA) family. ATP-dependent PFK group I subfamily. Prokaryotic clade 'B1' sub-subfamily. In terms of assembly, homotetramer. It depends on Mg(2+) as a cofactor.

The protein resides in the cytoplasm. The catalysed reaction is beta-D-fructose 6-phosphate + ATP = beta-D-fructose 1,6-bisphosphate + ADP + H(+). The protein operates within carbohydrate degradation; glycolysis; D-glyceraldehyde 3-phosphate and glycerone phosphate from D-glucose: step 3/4. With respect to regulation, allosterically activated by ADP and other diphosphonucleosides, and allosterically inhibited by phosphoenolpyruvate. Catalyzes the phosphorylation of D-fructose 6-phosphate to fructose 1,6-bisphosphate by ATP, the first committing step of glycolysis. In Streptococcus thermophilus (strain ATCC BAA-491 / LMD-9), this protein is ATP-dependent 6-phosphofructokinase.